The sequence spans 362 residues: 3-dehydroquinate synthase (362 aa).

NAD(+)-binding positions include 71–76 (DGEQYK), 105–109 (GVVGD), 129–130 (TT), lysine 142, lysine 151, and 169–172 (CLKT). The Zn(2+) site is built by glutamate 184, histidine 247, and histidine 264.

Belongs to the sugar phosphate cyclases superfamily. Dehydroquinate synthase family. It depends on Co(2+) as a cofactor. Requires Zn(2+) as cofactor. NAD(+) serves as cofactor.

It is found in the cytoplasm. It carries out the reaction 7-phospho-2-dehydro-3-deoxy-D-arabino-heptonate = 3-dehydroquinate + phosphate. It participates in metabolic intermediate biosynthesis; chorismate biosynthesis; chorismate from D-erythrose 4-phosphate and phosphoenolpyruvate: step 2/7. Its function is as follows. Catalyzes the conversion of 3-deoxy-D-arabino-heptulosonate 7-phosphate (DAHP) to dehydroquinate (DHQ). The chain is 3-dehydroquinate synthase from Shigella boydii serotype 18 (strain CDC 3083-94 / BS512).